Here is a 223-residue protein sequence, read N- to C-terminus: Thymidine kinase (223 aa).

ATP-binding positions include Gly19–Thr26 and Asp96–Gln99. Glu97 serves as the catalytic Proton acceptor. Positions 153, 156, 191, and 194 each coordinate Zn(2+).

Belongs to the thymidine kinase family. In terms of assembly, homotetramer.

It localises to the cytoplasm. It carries out the reaction thymidine + ATP = dTMP + ADP + H(+). This Ureaplasma urealyticum serovar 10 (strain ATCC 33699 / Western) protein is Thymidine kinase.